A 1024-amino-acid chain; its full sequence is Protein translocase subunit SecA (1024 aa).

Residues Gln-143, 161 to 165, and Asp-661 contribute to the ATP site; that span reads GEGKT. The interval 970–1024 is disordered; sequence HKAAESVYTASSDEPETNQEESPQQPAIAEKKPGRNDLCPCGSGKKYKNCHGQQP. Zn(2+)-binding residues include Cys-1008, Cys-1010, Cys-1019, and His-1020.

This sequence belongs to the SecA family. In terms of assembly, monomer and homodimer. Part of the essential Sec protein translocation apparatus which comprises SecA, SecYEG and auxiliary proteins SecDF. Other proteins may also be involved. Zn(2+) is required as a cofactor.

Its subcellular location is the cell inner membrane. It localises to the cytoplasm. The catalysed reaction is ATP + H2O + cellular proteinSide 1 = ADP + phosphate + cellular proteinSide 2.. In terms of biological role, part of the Sec protein translocase complex. Interacts with the SecYEG preprotein conducting channel. Has a central role in coupling the hydrolysis of ATP to the transfer of proteins into and across the cell membrane, serving as an ATP-driven molecular motor driving the stepwise translocation of polypeptide chains across the membrane. The sequence is that of Protein translocase subunit SecA from Pelodictyon phaeoclathratiforme (strain DSM 5477 / BU-1).